Consider the following 189-residue polypeptide: Large ribosomal subunit protein eL14 (189 aa).

It belongs to the eukaryotic ribosomal protein eL14 family.

Component of the large ribosomal subunit. The ribosome is a large ribonucleoprotein complex responsible for the synthesis of proteins in the cell. This Trypanosoma brucei brucei protein is Large ribosomal subunit protein eL14.